A 335-amino-acid chain; its full sequence is NADH-quinone oxidoreductase subunit H (335 aa).

A run of 8 helical transmembrane segments spans residues 11–31, 81–101, 114–134, 154–174, 187–207, 238–258, 270–290, and 307–327; these read VILT…CGAL, VIFT…FVVI, IGLL…LFAG, VSYE…VGSF, LWFI…GVAV, FFVG…TLFF, QLSF…FILL, and WKFC…IVLY.

The protein belongs to the complex I subunit 1 family. As to quaternary structure, NDH-1 is composed of 13 different subunits. Subunits NuoA, H, J, K, L, M, N constitute the membrane sector of the complex.

It is found in the cell inner membrane. The enzyme catalyses a quinone + NADH + 5 H(+)(in) = a quinol + NAD(+) + 4 H(+)(out). In terms of biological role, NDH-1 shuttles electrons from NADH, via FMN and iron-sulfur (Fe-S) centers, to quinones in the respiratory chain. The immediate electron acceptor for the enzyme in this species is believed to be ubiquinone. Couples the redox reaction to proton translocation (for every two electrons transferred, four hydrogen ions are translocated across the cytoplasmic membrane), and thus conserves the redox energy in a proton gradient. This subunit may bind ubiquinone. This is NADH-quinone oxidoreductase subunit H from Pseudomonas putida (strain ATCC 700007 / DSM 6899 / JCM 31910 / BCRC 17059 / LMG 24140 / F1).